A 93-amino-acid polypeptide reads, in one-letter code: MTKSELIERLCAEQTHLSAKEIEDAVKDILEHMASTLESGDRIEIRGFGSFSLHYREPRVGRNPKTGDKVELEGKYVPHFKPGKELRERVHIG.

Belongs to the bacterial histone-like protein family. Heterodimer of an alpha and a beta chain.

In terms of biological role, this protein is one of the two subunits of integration host factor, a specific DNA-binding protein that functions in genetic recombination as well as in transcriptional and translational control. In Vibrio vulnificus (strain YJ016), this protein is Integration host factor subunit beta.